We begin with the raw amino-acid sequence, 397 residues long: Subtilisin-like protease 3 (397 aa).

An N-terminal signal peptide occupies residues 1-19 (MGCIKVISVFLAAIAAVDA). The propeptide occupies 20–116 (RAFFHNRGGN…VEHDRVVKLA (97 aa)). In terms of domain architecture, Inhibitor I9 spans 35–116 (SYIVVMKDGV…VEHDRVVKLA (82 aa)). In terms of domain architecture, Peptidase S8 spans 126–397 (TWGLGRVSHK…NRLLYNGSGR (272 aa)). Active-site charge relay system residues include Asp158 and His189. A glycan (N-linked (GlcNAc...) asparagine) is linked at Asn250. Residue Ser344 is the Charge relay system of the active site. Residue Asn393 is glycosylated (N-linked (GlcNAc...) asparagine).

This sequence belongs to the peptidase S8 family.

The protein localises to the secreted. In terms of biological role, secreted subtilisin-like serine protease with keratinolytic activity that contributes to pathogenicity. In Arthroderma benhamiae (strain ATCC MYA-4681 / CBS 112371) (Trichophyton mentagrophytes), this protein is Subtilisin-like protease 3 (SUB3).